We begin with the raw amino-acid sequence, 646 residues long: Threonine--tRNA ligase (646 aa).

Positions 1–61 (MIKITFPDGS…NEDADFVLYK (61 aa)) constitute a TGS domain. Positions 242-541 (DHRKIGKEMQ…LIEHTAGKFP (300 aa)) are catalytic. Zn(2+) contacts are provided by cysteine 337, histidine 388, and histidine 518.

The protein belongs to the class-II aminoacyl-tRNA synthetase family. Homodimer. Requires Zn(2+) as cofactor.

It localises to the cytoplasm. The enzyme catalyses tRNA(Thr) + L-threonine + ATP = L-threonyl-tRNA(Thr) + AMP + diphosphate + H(+). Functionally, catalyzes the attachment of threonine to tRNA(Thr) in a two-step reaction: L-threonine is first activated by ATP to form Thr-AMP and then transferred to the acceptor end of tRNA(Thr). Also edits incorrectly charged L-seryl-tRNA(Thr). This chain is Threonine--tRNA ligase, found in Bacteroides thetaiotaomicron (strain ATCC 29148 / DSM 2079 / JCM 5827 / CCUG 10774 / NCTC 10582 / VPI-5482 / E50).